The following is a 351-amino-acid chain: Phosphate acyltransferase (351 aa).

It belongs to the PlsX family. As to quaternary structure, homodimer. Probably interacts with PlsY.

The protein localises to the cytoplasm. The catalysed reaction is a fatty acyl-[ACP] + phosphate = an acyl phosphate + holo-[ACP]. Its pathway is lipid metabolism; phospholipid metabolism. In terms of biological role, catalyzes the reversible formation of acyl-phosphate (acyl-PO(4)) from acyl-[acyl-carrier-protein] (acyl-ACP). This enzyme utilizes acyl-ACP as fatty acyl donor, but not acyl-CoA. This chain is Phosphate acyltransferase, found in Neisseria meningitidis serogroup A / serotype 4A (strain DSM 15465 / Z2491).